The primary structure comprises 215 residues: Small ribosomal subunit protein uS3 (215 aa).

Residues 38 to 107 (IRDYIKKTYH…KFQLNIEEVK (70 aa)) form the KH type-2 domain.

It belongs to the universal ribosomal protein uS3 family. As to quaternary structure, part of the 30S ribosomal subunit. Forms a tight complex with proteins S10 and S14.

Binds the lower part of the 30S subunit head. Binds mRNA in the 70S ribosome, positioning it for translation. This chain is Small ribosomal subunit protein uS3, found in Kosmotoga olearia (strain ATCC BAA-1733 / DSM 21960 / TBF 19.5.1).